Reading from the N-terminus, the 115-residue chain is MTQLLVTTTENIPGHPYEVIGEVFGLTTQSKNLVRNIGAGLKGLVGGEIKDYTKMLEESRDVAVNRLRDNASAMGADAVVMMRFDTGSISQDMQSVAAYGTAVRFITEDLTTDNA.

It belongs to the UPF0145 family.

The chain is UPF0145 protein lp_2083 from Lactiplantibacillus plantarum (strain ATCC BAA-793 / NCIMB 8826 / WCFS1) (Lactobacillus plantarum).